Reading from the N-terminus, the 373-residue chain is Dynein regulatory complex protein 9 (373 aa).

Positions glutamate 145–aspartate 200 form a coiled coil. The 30-residue stretch at arginine 336–lysine 365 folds into the IQ domain.

The protein belongs to the DRC9 family. In terms of assembly, component of the nexin-dynein regulatory complex (N-DRC).

It is found in the cytoplasm. Its subcellular location is the cytoskeleton. The protein localises to the flagellum axoneme. Functionally, component of the nexin-dynein regulatory complex (N-DRC), a key regulator of ciliary/flagellar motility which maintains the alignment and integrity of the distal axoneme and regulates microtubule sliding in motile axonemes. The protein is Dynein regulatory complex protein 9 of Chlamydomonas reinhardtii (Chlamydomonas smithii).